A 248-amino-acid chain; its full sequence is Zinc finger CCCH domain-containing protein 36 (248 aa).

2 disordered regions span residues 1-37 (MDTRKRGRPEAGSFNSNGGGYKKSKQEMESYSTGLGS) and 87-110 (MQGSGNGGRFSGRGESGPGHVSNF). The C3H1-type 1 zinc finger occupies 36-64 (GSKSKPCTKFFSTSGCPFGENCHFLHYVP). A compositionally biased stretch (gly residues) spans 90-103 (SGNGGRFSGRGESG). A KH domain is found at 113–177 (SATARFSVDA…EQISEASAMV (65 aa)). Positions 188 to 209 (AKKPPGGGLGGGGGMGSEGKPH) are disordered. The segment covering 192–204 (PGGGLGGGGGMGS) has biased composition (gly residues). Residues 213–240 (NFKTKICERFSKGNCTFGDRCHFAHGEA) form a C3H1-type 2 zinc finger.

In Arabidopsis thaliana (Mouse-ear cress), this protein is Zinc finger CCCH domain-containing protein 36.